We begin with the raw amino-acid sequence, 435 residues long: Serine protease snk (435 aa).

A signal peptide spans 1 to 27 (MIILWSLIVHLQLTCLHLILQTPNLEA). Residues 92-138 (FCRRSFDGRSGYCILAYQCLHVIREYRVHGTRIDICTHRNNVPVICC) enclose the Clip domain. 7 disulfides stabilise this stretch: Cys-93/Cys-137, Cys-104/Cys-127, Cys-110/Cys-138, Cys-179/Cys-303, Cys-220/Cys-236, Cys-346/Cys-366, and Cys-377/Cys-408. The Peptidase S1 domain maps to 186 to 432 (IVGGTPTRHG…YLDWIEKIAF (247 aa)). Residue His-235 is the Charge relay system of the active site. Asn-255 carries N-linked (GlcNAc...) asparagine glycosylation. The active-site Charge relay system is Asp-283. The active-site Charge relay system is the Ser-381.

Belongs to the peptidase S1 family. CLIP subfamily. As to quaternary structure, interacts (via N-terminal prodomain) with ea/easter (via Peptidase domain); leads to proteolytic activation of ea by snk. This interaction does not require sulfation of a vitelline membrane component by pip but proteolytic cleavage of ea by snk does. In terms of processing, proteolytically activated by gd. May also be cleaved by another protease.

The protein localises to the secreted. In terms of biological role, component of the extracellular signaling pathway that establishes the dorsal-ventral pathway of the embryo. A protease cascade involving ndl, gd, snk and ea results in activation of the spz Toll receptor ligand; acts downstream of ndl and gd. Activation of ea requires both activation of the ndl-gd-snk protease cascade and sulfation of a vitelline membrane component by pip. Localized activation of the Toll receptor in the ventral region of the embryo defines cell identities along the dorsal-ventral continuum. The polypeptide is Serine protease snk (Drosophila melanogaster (Fruit fly)).